A 413-amino-acid polypeptide reads, in one-letter code: Protein esc1 (413 aa).

Polar residues predominate over residues 1 to 22 (MSSYALPSMQPTPTSSIPLRQM). Disordered stretches follow at residues 1–202 (MSSY…NQPS) and 230–265 (MYVPQQQTSHSSGASYQNESANPPVQSPMQYSYSQG). A compositionally biased stretch (low complexity) spans 23–42 (SQPTTSAPSNSASSTPYSPQ). A compositionally biased stretch (polar residues) spans 43-63 (QVPLTHNSYPLSTPSSFQHGQ). Composition is skewed to low complexity over residues 86-103 (SAAPASSSPTSATLSTAA) and 116-126 (SSSSYVYSVPP). A compositionally biased stretch (polar residues) spans 127 to 136 (TNSTTSQASA). Residues 150-197 (STTLTPSTTDSSSTDVSSSDSVSTSASSSNASNTVSVTSPASSSATPL) show a composition bias toward low complexity. In terms of domain architecture, bHLH spans 334-385 (ELRTSHKLAERKRRKEIKELFDDLKDALPLDKSTKSSKWGLLTRAIQYIEQL).

As to quaternary structure, efficient DNA binding requires dimerization with another bHLH protein.

It localises to the nucleus. In terms of biological role, involved in the sexual differentiation process. Modulate the ability of the cell to differentiate in response to the nitrogen starvation signal; in particular in response to decreases in the level of cellular cAMP. In Schizosaccharomyces pombe (strain 972 / ATCC 24843) (Fission yeast), this protein is Protein esc1 (esc1).